The chain runs to 1202 residues: Liprin-alpha-1 (1202 aa).

The disordered stretch occupies residues 1 to 33; it reads MMCEVMPTISEAEGPPGGGGGHGSGSPSQPDAD. Gly residues predominate over residues 15–24; it reads PPGGGGGHGS. The stretch at 34–141 forms a coiled coil; that stretch reads SHFEQLMVSM…VSRHERSLRM (108 aa). Serine 150 is subject to Phosphoserine. Residues 176-214 adopt a coiled-coil conformation; that stretch reads EKVRERLRVALERCSLLEEELGATHKELMILKEQNNQKK. Disordered stretches follow at residues 224–245 and 426–446; these read NHEQ…SLSH and KNQE…HNKR. Threonine 230 is subject to Phosphothreonine. A phosphoserine mark is found at serine 239, serine 242, and serine 244. Coiled-coil stretches lie at residues 249 to 521 and 623 to 669; these read LAKV…GASL and ADAH…SGSL. Phosphoserine is present on serine 448. Basic and acidic residues predominate over residues 651-662; it reads ENTEQRAEEIES. The disordered stretch occupies residues 651–855; it reads ENTEQRAEEI…SKLGGQAEKN (205 aa). Phosphoserine is present on residues serine 666, serine 668, and serine 693. Residues 686 to 700 show a composition bias toward low complexity; the sequence is ASSLASSSPPGSGRS. Basic and acidic residues predominate over residues 725-736; it reads SREEVRDDKTTI. Threonine 761 carries the post-translational modification Phosphothreonine. A compositionally biased stretch (basic and acidic residues) spans 762–771; the sequence is VSHEDIRDIR. A Phosphoserine modification is found at serine 763. Residues 832–841 show a composition bias toward polar residues; that stretch reads VSETDNSSQD. The stretch at 847–871 forms a coiled coil; sequence KLGGQAEKNRKLQKKHELLEEARRQ. SAM domains lie at 878–944, 963–1027, and 1051–1120; these read WDGP…IMSL, NHEW…LRRL, and WSND…LLVM. The stretch at 1021–1050 forms a coiled coil; that stretch reads IMCLRRLNYDRKELERKREESQSEIKDVLV. A Phosphoserine modification is found at serine 1133. The residue at position 1159 (threonine 1159) is a Phosphothreonine. The segment at 1163-1202 is disordered; the sequence is NFRVTSSMSSPSMQPKKMQMDGNVSGTQRLDSATVRTYSC. Low complexity predominate over residues 1168–1179; the sequence is SSMSSPSMQPKK. Residues 1184 to 1202 show a composition bias toward polar residues; it reads GNVSGTQRLDSATVRTYSC.

This sequence belongs to the liprin family. Liprin-alpha subfamily. As to quaternary structure, homodimer. Interacts with PTPRF (via D2 domain). Part of a cortical microtubule stabilization complex (CMSC) composed of KANK1, PPFIA1, PPFIBP1, ERC1/ELKS, PHLDB2/LL5beta, CLASPs, KIF21A and possibly additional interactors; within CMSCs KANK1 and PHLDB2/LL5beta seem to be the core components for recruiting microtubule-binding proteins KIF21A and CLASPs, whereas PPFIA1, PPFIBP1 and ERC1/ELKS serve as scaffolds for protein clustering. In terms of tissue distribution, ubiquitous.

Its subcellular location is the cytoplasm. It localises to the cell cortex. Its function is as follows. May regulate the disassembly of focal adhesions. May localize receptor-like tyrosine phosphatases type 2A at specific sites on the plasma membrane, possibly regulating their interaction with the extracellular environment and their association with substrates. The chain is Liprin-alpha-1 (PPFIA1) from Homo sapiens (Human).